A 416-amino-acid chain; its full sequence is Tyrosine--tRNA ligase (416 aa).

Residue Y34 participates in L-tyrosine binding. A 'HIGH' region motif is present at residues 39 to 48 (PTGDSLHIGH). 2 residues coordinate L-tyrosine: Y165 and Q169. The 'KMSKS' region motif lies at 227–231 (KFGKT). K230 serves as a coordination point for ATP. Residues 349 to 416 (KNIVEWLVDT…KKKYFLARVK (68 aa)) form the S4 RNA-binding domain.

Belongs to the class-I aminoacyl-tRNA synthetase family. TyrS type 1 subfamily. As to quaternary structure, homodimer.

It is found in the cytoplasm. It carries out the reaction tRNA(Tyr) + L-tyrosine + ATP = L-tyrosyl-tRNA(Tyr) + AMP + diphosphate + H(+). In terms of biological role, catalyzes the attachment of tyrosine to tRNA(Tyr) in a two-step reaction: tyrosine is first activated by ATP to form Tyr-AMP and then transferred to the acceptor end of tRNA(Tyr). This is Tyrosine--tRNA ligase from Ligilactobacillus salivarius (strain UCC118) (Lactobacillus salivarius).